Here is a 511-residue protein sequence, read N- to C-terminus: Early growth response protein 1 (511 aa).

Disordered regions lie at residues 133–169 (ASIPSSTSQATHPSSSSTSSIPSSSSSSTSSASLSCS) and 291–312 (PSRMRKYPNRPSKTPPHERPYA). Residues 137 to 169 (SSTSQATHPSSSSTSSIPSSSSSSTSSASLSCS) are compositionally biased toward low complexity. 3 consecutive C2H2-type zinc fingers follow at residues 311–335 (YACPVETCDRRFSRSDELTRHIRIH), 341–363 (FQCRICMRNFSRSDHLTTHIRTH), and 369–391 (FACEICGRKFARSDERKRHTKIH). A disordered region spans residues 384–406 (RKRHTKIHMRQKDKKAEKGATAA). A compositionally biased stretch (basic residues) spans 386-396 (RHTKIHMRQKD).

It belongs to the EGR C2H2-type zinc-finger protein family. Detected in muscle and brain.

The protein localises to the nucleus. The protein resides in the cytoplasm. Transcriptional regulator. Recognizes and binds to the DNA sequence 5'-GCG(T/G)GGGCG-3'(EGR-site) in the promoter region of target genes. Binds double-stranded target DNA, irrespective of the cytosine methylation status. Regulates the transcription of numerous target genes, and thereby plays an important role in regulating the response to growth factors, DNA damage, and ischemia. Plays a role in the regulation of cell survival, proliferation and cell death. Mediates responses to ischemia and hypoxia; regulates the expression of proteins that are involved in inflammatory processes. Plays a role in regulating the expression of circadian clock genes. Plays a role in the organization of Muller glia cells in the inner and outer plexiform layers of the retina. This chain is Early growth response protein 1 (egr1), found in Danio rerio (Zebrafish).